A 309-amino-acid polypeptide reads, in one-letter code: Bifunctional methylenetetrahydrofolate dehydrogenase/cyclohydrolase, mitochondrial (309 aa).

Belongs to the tetrahydrofolate dehydrogenase/cyclohydrolase family. In terms of assembly, homodimer. Mg(2+) is required as a cofactor.

It is found in the mitochondrion. The catalysed reaction is (6R)-5,10-methylene-5,6,7,8-tetrahydrofolate + NAD(+) = (6R)-5,10-methenyltetrahydrofolate + NADH. It carries out the reaction (6R)-5,10-methenyltetrahydrofolate + H2O = (6R)-10-formyltetrahydrofolate + H(+). Its function is as follows. May play a role in spermatogenesis. The polypeptide is Bifunctional methylenetetrahydrofolate dehydrogenase/cyclohydrolase, mitochondrial (Nmdmc) (Drosophila melanogaster (Fruit fly)).